The following is a 337-amino-acid chain: MSYSGAGLGKPGSGKRRIRDLLTQSDNRVCADCGAPDPKWASANIGVFICLKCCGVHRSLGSHISKVLSVTLDEWSDEEVDSMIEIGGNASANSIYEAFIPEGSSKPGPDASHDQRMRFIRSKYEHQEFLKPSLRITSVRGSSTKTPAFLSSSLSKKIVDSFRTNSSSQQPQLEGMVEFIGLLKVTIKKGTNMAIRDMMSSDPYVVLTLGQQKAQSTVVKSNLNPVWNEELMLSVPHNYGSVKLQVFDYDTFSADDIMGEAEIDIQPLITSAMAFGDPEMFGDMQIGKWLKSHDNALIEDSIINIADGKVKQEVQIKLQNVESGELELEMEWLPLEQ.

One can recognise an Arf-GAP domain in the interval 15–137 (KRRIRDLLTQ…EFLKPSLRIT (123 aa)). The C4-type zinc-finger motif lies at 30 to 53 (CADCGAPDPKWASANIGVFICLKC). Positions 164 to 281 (TNSSSQQPQL…AMAFGDPEMF (118 aa)) constitute a C2 domain. Residues Asp250, Ser253, and Asp256 each contribute to the Ca(2+) site.

It depends on Ca(2+) as a cofactor. Expressed in roots, leaves, flowers and siliques. Low levels of expression in seeds and stems.

It is found in the golgi apparatus. It localises to the cell membrane. GTPase-activating protein (GAP) for ADP ribosylation factor (ARF). Binds phosphatidylinositol 3-monophosohate (PI-3-P) and anionic phospholipids. This chain is ADP-ribosylation factor GTPase-activating protein AGD12 (AGD12), found in Arabidopsis thaliana (Mouse-ear cress).